The primary structure comprises 924 residues: MQIPKYENKPFKPPRRVGSNKYTQLKPTATAVTTAPISKAKVTVNLKRSISAGPTLNLAKKPNNLSSNENTRYFTIMYRKPTTKKHKTWSGDGYATLKASSDKLCFYNEAGKFLGSSMLPSDSDSLFETLFKAGSNEVQLDYELKENAEIRSAKEALSQNMGNPNPPTTSTTETVPSTKNDGGKYQMPLSQLFSLNTVKRFKSVTKQTNEHMTTVPKTSQNSKAKKYYPVFDVNKIDNPIVMNKNAAAEVDVIVDPLLGKFLRPHQREGVKFMYDCLMGLARPTIENPDIDCTTKSLVLENDSDISGCLLADDMGLGKTLMSITLIWTLIRQTPFASKVSCSQSGIPLTGLCKKILVVCPVTLIGNWKREFGKWLNLSRIGVLTLSSRNSPDMDKMAVRNFLKVQRTYQVLIIGYEKLLSVSEELEKNKHLIDMLVCDEGHRLKNGASKILNTLKSLDIRRKLLLTGTPIQNDLNEFFTIIDFINPGILGSFASFKRRFIIPITRARDTANRYNEELLEKGEERSKEMIEITKRFILRRTNAILEKYLPPKTDIILFCKPYSQQILAFKDILQGARLDFGQLTFSSSLGLITLLKKVCNSPGLVGSDPYYKSHIKDTQSQDSYSRSLNSGKLRVLMTLLEGIRKGTKEKVVVVSNYTQTLDIIENLMNMAGMSHCRLDGSIPAKQRDSIVTSFNRNPAIFGFLLSAKSGGVGLNLVGASRLILFDNDWNPSVDLQAMSRIHRDGQKKPCFIYRLVTTGCIDEKILQRQLMKNSLSQKFLGDSEMRNKESSNDDLFNKEDLKDLFSVHTDTKSNTHDLICSCDGLGEEIEYPETNQQQNTVELRKRSTTTWTSALDLQKKMNEAATNDDAKKSQYIRQCLVHYKHIDPARQDELFDEVITDSFTDLKDSITFAFVKPGEICLREQ.

The span at 1–10 (MQIPKYENKP) shows a compositional bias: basic and acidic residues. Disordered stretches follow at residues 1-21 (MQIP…GSNK) and 155-183 (EALS…NDGG). Over residues 168–178 (TTSTTETVPST) the composition is skewed to low complexity. Residues 299–487 (LENDSDISGC…FTIIDFINPG (189 aa)) enclose the Helicase ATP-binding domain. Residue 346–353 (IPLTGLCK) participates in ATP binding. Positions 472–475 (NDLN) match the DEGH box motif. K615 is covalently cross-linked (Glycyl lysine isopeptide (Lys-Gly) (interchain with G-Cter in ubiquitin)). One can recognise a Helicase C-terminal domain in the interval 631–790 (KLRVLMTLLE…DSEMRNKESS (160 aa)).

It belongs to the SNF2/RAD54 helicase family. In terms of assembly, interacts with RAD51 and DMC1.

It is found in the nucleus. It catalyses the reaction ATP + H2O = ADP + phosphate + H(+). Functionally, involved in the recombinational repair of double-strand breaks (DSB) in DNA during mitosis and meiosis. Has DNA dependent ATPase activity. Promotes D-loop (displacement loop) formation with RAD51 recombinase. Modifies the topology of double-stranded DNA during the D-loop reaction to facilitate the invasion of the homologous duplex molecule by the initiating single-stranded DNA substrate. Required for adaptation from G2/M checkpoint arrest induced by a double strand break, by participating in monitoring the extent of single-stranded DNA produced by resection of DNA ends. This role is distinct from its roles in recombination. Promotes colocalization of RAD51 and DMC1 during meiotic recombination. Involved in crossover interference. This chain is DNA repair and recombination protein RDH54 (RDH54), found in Saccharomyces cerevisiae (strain YJM789) (Baker's yeast).